The chain runs to 596 residues: NADH-quinone oxidoreductase subunit C/D (596 aa).

The tract at residues 1–186 is NADH dehydrogenase I subunit C; sequence MTDLTAQDAA…DPFELTKAKQ (186 aa). The tract at residues 210-596 is NADH dehydrogenase I subunit D; it reads DFMFLNLGPN…IDFVMSDVDR (387 aa).

It in the N-terminal section; belongs to the complex I 30 kDa subunit family. The protein in the C-terminal section; belongs to the complex I 49 kDa subunit family. As to quaternary structure, NDH-1 is composed of 13 different subunits. Subunits NuoB, CD, E, F, and G constitute the peripheral sector of the complex.

Its subcellular location is the cell inner membrane. It catalyses the reaction a quinone + NADH + 5 H(+)(in) = a quinol + NAD(+) + 4 H(+)(out). In terms of biological role, NDH-1 shuttles electrons from NADH, via FMN and iron-sulfur (Fe-S) centers, to quinones in the respiratory chain. The immediate electron acceptor for the enzyme in this species is believed to be ubiquinone. Couples the redox reaction to proton translocation (for every two electrons transferred, four hydrogen ions are translocated across the cytoplasmic membrane), and thus conserves the redox energy in a proton gradient. This chain is NADH-quinone oxidoreductase subunit C/D, found in Salmonella choleraesuis (strain SC-B67).